The sequence spans 222 residues: GTP cyclohydrolase 1 (222 aa).

3 residues coordinate Zn(2+): C111, H114, and C182.

Belongs to the GTP cyclohydrolase I family. Homomer.

The catalysed reaction is GTP + H2O = 7,8-dihydroneopterin 3'-triphosphate + formate + H(+). It functions in the pathway cofactor biosynthesis; 7,8-dihydroneopterin triphosphate biosynthesis; 7,8-dihydroneopterin triphosphate from GTP: step 1/1. The protein is GTP cyclohydrolase 1 of Shigella boydii serotype 18 (strain CDC 3083-94 / BS512).